Consider the following 103-residue polypeptide: Histone H4 (103 aa).

A compositionally biased stretch (gly residues) spans 1–14 (MSGRGKGGKGLGKG). The segment at 1–20 (MSGRGKGGKGLGKGGAKRHR) is disordered. The DNA-binding element occupies 17–21 (KRHRK).

The protein belongs to the histone H4 family. The nucleosome is a histone octamer containing two molecules each of H2A, H2B, H3 and H4 assembled in one H3-H4 heterotetramer and two H2A-H2B heterodimers. The octamer wraps approximately 147 bp of DNA.

The protein resides in the nucleus. It localises to the chromosome. Its function is as follows. Core component of nucleosome. Nucleosomes wrap and compact DNA into chromatin, limiting DNA accessibility to the cellular machineries which require DNA as a template. Histones thereby play a central role in transcription regulation, DNA repair, DNA replication and chromosomal stability. DNA accessibility is regulated via a complex set of post-translational modifications of histones, also called histone code, and nucleosome remodeling. This is Histone H4 from Eimeria tenella (Coccidian parasite).